A 440-amino-acid chain; its full sequence is Eukaryotic translation initiation factor 3 subunit E (440 aa).

The 174-residue stretch at 219–392 folds into the PCI domain; that stretch reads VYFNYPKGRD…GQVVMGAKTT (174 aa).

This sequence belongs to the eIF-3 subunit E family. Component of the eukaryotic translation initiation factor 3 (eIF-3) complex.

It is found in the cytoplasm. Its function is as follows. Component of the eukaryotic translation initiation factor 3 (eIF-3) complex, which is involved in protein synthesis of a specialized repertoire of mRNAs and, together with other initiation factors, stimulates binding of mRNA and methionyl-tRNAi to the 40S ribosome. The eIF-3 complex specifically targets and initiates translation of a subset of mRNAs involved in cell proliferation. This chain is Eukaryotic translation initiation factor 3 subunit E, found in Brugia malayi (Filarial nematode worm).